Reading from the N-terminus, the 286-residue chain is MLDLWYSESHADDTKFSIRVKEHLYSEKTPFQQIDFFKSETFGTFFTLDGYIMMTEKDEFIYHEMITHVPMAVNPKIKKVLIVGGGDGGTSREILRYNTIEKVDMVEIDERVVRLCQKYLTQTSCKLDNDSRLTMHFEDGKEFVKRAETGFYDLILVDSTDPIGPGEGLFTNEFYRDCERILSDDGILINQHESPYYKDYCHEMKRAHSKIKDKFPISMVYQFHMPTYASGHWLFGFASKKYHPLNNLNADSWNSLGLKTKYYNTNLHKGAFALPNYVIDELEKTE.

Residues 3 to 240 enclose the PABS domain; that stretch reads DLWYSESHAD…GHWLFGFASK (238 aa). Glutamine 32 provides a ligand contact to S-methyl-5'-thioadenosine. Histidine 63 and aspartate 87 together coordinate spermidine. S-methyl-5'-thioadenosine contacts are provided by residues glutamate 107 and 139-140; that span reads DG. Aspartate 158 serves as the catalytic Proton acceptor. Residue 158–161 participates in spermidine binding; sequence DSTD. Position 165 (proline 165) interacts with S-methyl-5'-thioadenosine.

This sequence belongs to the spermidine/spermine synthase family. As to quaternary structure, homodimer or homotetramer.

It is found in the cytoplasm. It carries out the reaction S-adenosyl 3-(methylsulfanyl)propylamine + putrescine = S-methyl-5'-thioadenosine + spermidine + H(+). It functions in the pathway amine and polyamine biosynthesis; spermidine biosynthesis; spermidine from putrescine: step 1/1. Functionally, catalyzes the irreversible transfer of a propylamine group from the amino donor S-adenosylmethioninamine (decarboxy-AdoMet) to putrescine (1,4-diaminobutane) to yield spermidine. This is Polyamine aminopropyltransferase from Clostridium acetobutylicum (strain ATCC 824 / DSM 792 / JCM 1419 / IAM 19013 / LMG 5710 / NBRC 13948 / NRRL B-527 / VKM B-1787 / 2291 / W).